Here is a 426-residue protein sequence, read N- to C-terminus: Serine hydroxymethyltransferase 1 (426 aa).

(6S)-5,6,7,8-tetrahydrofolate is bound by residues L118 and 122-124; that span reads GHL. K227 is modified (N6-(pyridoxal phosphate)lysine).

It belongs to the SHMT family. In terms of assembly, homodimer. Pyridoxal 5'-phosphate is required as a cofactor.

The protein resides in the cytoplasm. The catalysed reaction is (6R)-5,10-methylene-5,6,7,8-tetrahydrofolate + glycine + H2O = (6S)-5,6,7,8-tetrahydrofolate + L-serine. Its pathway is one-carbon metabolism; tetrahydrofolate interconversion. It participates in amino-acid biosynthesis; glycine biosynthesis; glycine from L-serine: step 1/1. Its function is as follows. Catalyzes the reversible interconversion of serine and glycine with tetrahydrofolate (THF) serving as the one-carbon carrier. This reaction serves as the major source of one-carbon groups required for the biosynthesis of purines, thymidylate, methionine, and other important biomolecules. Also exhibits THF-independent aldolase activity toward beta-hydroxyamino acids, producing glycine and aldehydes, via a retro-aldol mechanism. This chain is Serine hydroxymethyltransferase 1, found in Mycobacterium bovis (strain ATCC BAA-935 / AF2122/97).